Consider the following 422-residue polypeptide: Histidinol dehydrogenase (422 aa).

Positions 123, 183, and 206 each coordinate NAD(+). Residues Ser229, Gln251, and His254 each contribute to the substrate site. Zn(2+)-binding residues include Gln251 and His254. Active-site proton acceptor residues include Glu320 and His321. Residues His321, Asp354, Glu408, and His413 each coordinate substrate. Zn(2+) is bound at residue Asp354. Zn(2+) is bound at residue His413.

The protein belongs to the histidinol dehydrogenase family. Zn(2+) serves as cofactor.

The enzyme catalyses L-histidinol + 2 NAD(+) + H2O = L-histidine + 2 NADH + 3 H(+). Its pathway is amino-acid biosynthesis; L-histidine biosynthesis; L-histidine from 5-phospho-alpha-D-ribose 1-diphosphate: step 9/9. Catalyzes the sequential NAD-dependent oxidations of L-histidinol to L-histidinaldehyde and then to L-histidine. The polypeptide is Histidinol dehydrogenase (Natronomonas pharaonis (strain ATCC 35678 / DSM 2160 / CIP 103997 / JCM 8858 / NBRC 14720 / NCIMB 2260 / Gabara) (Halobacterium pharaonis)).